The sequence spans 488 residues: Surface lipoprotein assembly modifier 1 (488 aa).

Residues 1-31 form the signal peptide; that stretch reads MVIFYFCGKTFMPARNRWMLLLPLLASAAYA. The N-terminal domain stretch occupies residues 32-202; sequence EETPREPDLR…LYRKALRERD (171 aa). TPR repeat units lie at residues 118-151 and 171-204; these read MLAL…QPDA and AADQ…RDAW. Residues 203–488 are C-terminal probable beta barrel, partially restores export of lipoproteins; that stretch reads AWKVNGGFSV…RAFVEFNKTF (286 aa). Beta stranded transmembrane passes span 204 to 214, 241 to 252, 257 to 267, 280 to 291, 294 to 304, 316 to 325, 330 to 340, 354 to 364, 368 to 377, 393 to 402, 407 to 417, 439 to 448, 455 to 464, and 478 to 488; these read WKVNGGFSVTR, VNYRLGAEKKWS, WYTTAGGDVSG, TAGVSGGIGFAD, KDAGLAVFHER, NGARLYFNRW, WQTLSSAEWGR, LQISNSLVFYR, QYWMGGLDFY, GLRFAWGQEW, LSSLLRLGAAK, LNTSLSLWHR, ITPRLTLSHR, and NRAFVEFNKTF.

Belongs to the Slam family. In terms of assembly, interacts with the C-terminal domain of surface lipoprotein TbpB.

Its subcellular location is the cell outer membrane. Its function is as follows. Required for correct export to the cell surface of some cell outer membrane lipoproteins both in Neisseria and heterologously in E.coli. This chain is Surface lipoprotein assembly modifier 1, found in Neisseria meningitidis serogroup B (strain ATCC BAA-335 / MC58).